The sequence spans 569 residues: Proline--tRNA ligase (569 aa).

This sequence belongs to the class-II aminoacyl-tRNA synthetase family. ProS type 1 subfamily. In terms of assembly, homodimer.

Its subcellular location is the cytoplasm. The enzyme catalyses tRNA(Pro) + L-proline + ATP = L-prolyl-tRNA(Pro) + AMP + diphosphate. Catalyzes the attachment of proline to tRNA(Pro) in a two-step reaction: proline is first activated by ATP to form Pro-AMP and then transferred to the acceptor end of tRNA(Pro). As ProRS can inadvertently accommodate and process non-cognate amino acids such as alanine and cysteine, to avoid such errors it has two additional distinct editing activities against alanine. One activity is designated as 'pretransfer' editing and involves the tRNA(Pro)-independent hydrolysis of activated Ala-AMP. The other activity is designated 'posttransfer' editing and involves deacylation of mischarged Ala-tRNA(Pro). The misacylated Cys-tRNA(Pro) is not edited by ProRS. The sequence is that of Proline--tRNA ligase from Dehalococcoides mccartyi (strain CBDB1).